We begin with the raw amino-acid sequence, 489 residues long: MSHLVQLIDGQWLAGEGKPFESMDPAKNEVIWQGGAASASQVDAAVKAARAAFYHWSDLALEDRLAIVRRYADLLGEHKEALALTIARETGKPLWETRTEVAAMQGKIAISIRAHDERTGTVENPMPGAKAFVRHKPHGVVAVFGPYNFPGHLPNGHIVPALIAGNTVVFKPSELTPMVAEAMLKIWQEAGLPKGVLNLVQGEVETGKALAGNPDIDGLFFTGSSRTGHFLHQQFAGQPGKILALEMGGNNPLIVKDVSDVDGAVHAIVQSAFITSGQRCTCSRRLFVERGARGDALVKRLVEVVGQIKVGLYDAADQPFMGAMISEKAALGMVAAQANLQQLGGESLLTLKHLEAGTGFVSPGIIDVTAIGALPDEEYFGPLLQLIRYDDFDAAIDQGNATSFGLSAGLLGDNEADWQHFFKRIRAGIVNWNKPITGASSAAPFGGIGASGNHRASAYYAADYCAYPVASVEDSKAAMPDQLSPGLTF.

223–228 provides a ligand contact to NAD(+); that stretch reads GSSRTG. Catalysis depends on residues glutamate 246 and cysteine 280.

It belongs to the aldehyde dehydrogenase family. AstD subfamily.

It carries out the reaction N-succinyl-L-glutamate 5-semialdehyde + NAD(+) + H2O = N-succinyl-L-glutamate + NADH + 2 H(+). Its pathway is amino-acid degradation; L-arginine degradation via AST pathway; L-glutamate and succinate from L-arginine: step 4/5. Its function is as follows. Catalyzes the NAD-dependent reduction of succinylglutamate semialdehyde into succinylglutamate. The polypeptide is N-succinylglutamate 5-semialdehyde dehydrogenase (Aeromonas salmonicida (strain A449)).